The following is a 133-amino-acid chain: MANHDPISDMLTRIRNASEKRHEKTKVPASRMSLSIAKVLQSEGFIAEINEEGEGFRKQLILGLKYTGKHRSPIIRSMQRVSRPGLRIYKNTRGLPKVLGGLGIAIISTSNGVMSDRDARKQGVGGEVLCYVC.

The interval 1–28 (MANHDPISDMLTRIRNASEKRHEKTKVP) is disordered. A compositionally biased stretch (basic and acidic residues) spans 16 to 26 (NASEKRHEKTK).

Belongs to the universal ribosomal protein uS8 family. As to quaternary structure, part of the 30S ribosomal subunit. Contacts proteins S5 and S12.

Its function is as follows. One of the primary rRNA binding proteins, it binds directly to 16S rRNA central domain where it helps coordinate assembly of the platform of the 30S subunit. This Prochlorococcus marinus (strain NATL1A) protein is Small ribosomal subunit protein uS8.